A 355-amino-acid chain; its full sequence is Zinc finger protein CONSTANS-LIKE 1 (355 aa).

Zn(2+) is bound by residues Cys-12, Cys-15, Cys-35, His-40, Cys-55, Cys-58, Cys-78, and His-83. The B box-type 1; atypical zinc-finger motif lies at 12–54 (CDTCRSAACTVYCRADSAYLCSSCDAQVHAANRLASRHERVRV). A B box-type 2; atypical zinc finger spans residues 55–97 (CQSCERAPAAFFCKADAASLCTTCDSEIHSANPLARRHQRVPI). Residues 252-264 (ESTTSDATVSNPR) show a composition bias toward polar residues. The tract at residues 252–281 (ESTTSDATVSNPRSPKAVTDQPPYPPAQML) is disordered. The CCT domain occupies 286-328 (REARVLRYREKKKMRKFEKTIRYASRKAYAEKRPRIKGRFAKK).

It belongs to the CONSTANS family. Highly expressed in leaves and at lower levels in stems, flowers and siliques. Not detected in roots.

It localises to the nucleus. Its function is as follows. Putative transcription factor that may be involved in the light input to the circadian clock but does not affect flowering time. The chain is Zinc finger protein CONSTANS-LIKE 1 (COL1) from Arabidopsis thaliana (Mouse-ear cress).